Here is a 333-residue protein sequence, read N- to C-terminus: Phosphate acyltransferase (333 aa).

The protein belongs to the PlsX family. In terms of assembly, homodimer. Probably interacts with PlsY.

It localises to the cytoplasm. It carries out the reaction a fatty acyl-[ACP] + phosphate = an acyl phosphate + holo-[ACP]. It participates in lipid metabolism; phospholipid metabolism. In terms of biological role, catalyzes the reversible formation of acyl-phosphate (acyl-PO(4)) from acyl-[acyl-carrier-protein] (acyl-ACP). This enzyme utilizes acyl-ACP as fatty acyl donor, but not acyl-CoA. The protein is Phosphate acyltransferase of Lactobacillus acidophilus (strain ATCC 700396 / NCK56 / N2 / NCFM).